The primary structure comprises 505 residues: Proton-coupled zinc antiporter SLC30A1 (505 aa).

The Cytoplasmic segment spans residues Met1–Arg10. The chain crosses the membrane as a helical span at residues Leu11–Val31. Topologically, residues Thr32–Leu35 are extracellular. The chain crosses the membrane as a helical span at residues Ala36 to Val56. Zn(2+) is bound by residues His43 and Asp47. Residues Ala57–Met80 lie on the Cytoplasmic side of the membrane. A helical transmembrane segment spans residues Gly81–Ile101. Topologically, residues Glu102–Pro113 are extracellular. A helical membrane pass occupies residues Leu114 to Phe134. Topologically, residues His135 to Val246 are cytoplasmic. The disordered stretch occupies residues Gln142–Thr215. The span at Thr187 to Gly199 shows a compositional bias: polar residues. Basic and acidic residues predominate over residues Asp203–Asp214. A helical membrane pass occupies residues Phe247–Phe267. The Zn(2+) site is built by His249 and Asp253. The Extracellular portion of the chain corresponds to Tyr268–Ala306. A glycan (N-linked (GlcNAc...) asparagine) is linked at Asn297. A helical membrane pass occupies residues Gly307–Leu327. The Cytoplasmic portion of the chain corresponds to Tyr328 to Leu505. The residue at position 504 (Ser504) is a Phosphoserine.

It belongs to the cation diffusion facilitator (CDF) transporter (TC 2.A.4) family. SLC30A subfamily. Homodimer. Interacts with TMEM163. Interacts and forms a complex with TMC6 and TMC8; the interaction regulates zinc transport into the ER.

It is found in the cell membrane. Its subcellular location is the basolateral cell membrane. It localises to the cytoplasmic vesicle membrane. The protein resides in the cytoplasm. The protein localises to the endoplasmic reticulum membrane. It is found in the golgi apparatus membrane. Its subcellular location is the nucleus membrane. The enzyme catalyses Zn(2+)(in) + 2 H(+)(out) = Zn(2+)(out) + 2 H(+)(in). Its function is as follows. Zinc ion:proton antiporter that could function at the plasma membrane mediating zinc efflux from cells against its electrochemical gradient protecting them from intracellular zinc accumulation and toxicity. Alternatively, could prevent the transport to the plasma membrane of CACNB2, the L-type calcium channels regulatory subunit, through a yet to be defined mechanism. By modulating the expression of these channels at the plasma membrane, could prevent calcium and zinc influx into cells. By the same mechanism, could also prevent L-type calcium channels-mediated heavy metal influx into cells. In some cells, could also function as a zinc ion:proton antiporter mediating zinc entry into the lumen of cytoplasmic vesicles. In macrophages, can increase zinc ions concentration into the lumen of cytoplasmic vesicles containing engulfed bacteria and could help inactivate them. Forms a complex with TMC6/EVER1 and TMC8/EVER2 at the ER membrane of keratynocytes which facilitates zinc uptake into the ER. Down-regulates the activity of transcription factors induced by zinc and cytokines. The sequence is that of Proton-coupled zinc antiporter SLC30A1 from Macaca fascicularis (Crab-eating macaque).